A 205-amino-acid polypeptide reads, in one-letter code: uncharacterized protein (205 aa).

The Cytoplasmic segment spans residues 1–63 (MQRTRELESS…QHPKVAKFLK (63 aa)). A helical transmembrane segment spans residues 64–84 (VQLVFDLISLFIFATHQLLLL). Topologically, residues 85–124 (EDGNFGKHYFKRKTKRCSKFSCSRCNANAHHPKWFKFKHS) are extracellular. Residues 125-145 (LLCLGTFCFGVYSLVKINKFF) traverse the membrane as a helical segment. Over 146–205 (KTDQTVDLNRLLELFFWQLNAILNMKLFAFYGDHLESHSAPLDVYEDSFANKSSSGGDEV) the chain is Cytoplasmic.

Its subcellular location is the membrane. This is an uncharacterized protein from Saccharomyces cerevisiae (strain ATCC 204508 / S288c) (Baker's yeast).